The chain runs to 824 residues: Intraflagellar transport protein 88 homolog (824 aa).

The tract at residues 113–134 (FDPLSQSRGPASPLEAKKKDSP) is disordered. TPR repeat units follow at residues 197 to 230 (YSVL…KMFS), 233 to 266 (GILK…VPSV), 272 to 305 (IKIM…APNL), 307 to 338 (AGYN…PLEI), 415 to 448 (NDLE…DSRV), 450 to 483 (SAAA…DRYN), 484 to 517 (PAAL…DSSC), 518 to 551 (TEAL…LRNS), 552 to 585 (AEVL…IPTD), 586 to 619 (PQVL…FPCN), 620 to 653 (IEVI…QPTQ), and 654 to 687 (VKWQ…FPEN). Positions 724-824 (EQRIKSGRDG…EELGDDLLPE (101 aa)) are disordered. A compositionally biased stretch (polar residues) spans 748–757 (DSGQNYSASS). A compositionally biased stretch (basic and acidic residues) spans 797–808 (ERPKTAAKKRID). The segment covering 809–824 (EDDFADEELGDDLLPE) has biased composition (acidic residues).

In terms of assembly, component of the IFT complex B, at least composed of IFT20, IFT22, IFT25, IFT27, IFT46, IFT52, TRAF3IP1/IFT54, IFT57, IFT74, IFT80, IFT81, and IFT88. Interacts with IFT20, IFT22, IFT25, IFT27, IFT52, TRAF3IP1, IFT74, IFT80 and IFT81. Interacts with IFT172. Interacts with IFT57. Interacts with IFT46. Interacts with IFT70B. Interacts with C2CD3. Interacts with ENTR1 (via N-terminus). Interacts with LRRC56. Interacts with DZIP1. Interacts with CCDC38. Interacts with CCDC146. Interacts with CFAP53. In terms of tissue distribution, expressed in the heart, brain, liver, lung, kidney, skeletal muscle and pancreas.

The protein localises to the cytoplasm. Its subcellular location is the cytoskeleton. It is found in the microtubule organizing center. The protein resides in the centrosome. It localises to the centriole. The protein localises to the cell projection. Its subcellular location is the cilium. It is found in the cilium basal body. The protein resides in the flagellum. In terms of biological role, positively regulates primary cilium biogenesis. Also involved in autophagy since it is required for trafficking of ATG16L and the expansion of the autophagic compartment. This Homo sapiens (Human) protein is Intraflagellar transport protein 88 homolog (IFT88).